A 410-amino-acid chain; its full sequence is Na(+)/H(+) antiporter NhaA 1/4 (410 aa).

Transmembrane regions (helical) follow at residues 16 to 36 (VGGS…NSPL), 55 to 75 (LNLS…FFIV), 95 to 115 (ALPI…FLAF), 125 to 145 (GGWG…LAVV), 156 to 176 (FLLT…AVAC), 178 to 198 (SGIN…FGYL), 215 to 235 (AWLL…ACGV), 275 to 295 (IALP…AGGF), 299 to 319 (AITW…IFGG), 340 to 360 (IAGI…IAEL), and 371 to 391 (AKGA…LLLG).

Belongs to the NhaA Na(+)/H(+) (TC 2.A.33) antiporter family.

Its subcellular location is the cell membrane. The enzyme catalyses Na(+)(in) + 2 H(+)(out) = Na(+)(out) + 2 H(+)(in). Na(+)/H(+) antiporter that extrudes sodium in exchange for external protons. This Streptomyces coelicolor (strain ATCC BAA-471 / A3(2) / M145) protein is Na(+)/H(+) antiporter NhaA 1/4.